The following is a 172-amino-acid chain: Large ribosomal subunit protein uL10 (172 aa).

Belongs to the universal ribosomal protein uL10 family. As to quaternary structure, part of the ribosomal stalk of the 50S ribosomal subunit. The N-terminus interacts with L11 and the large rRNA to form the base of the stalk. The C-terminus forms an elongated spine to which L12 dimers bind in a sequential fashion forming a multimeric L10(L12)X complex.

Forms part of the ribosomal stalk, playing a central role in the interaction of the ribosome with GTP-bound translation factors. This chain is Large ribosomal subunit protein uL10, found in Rhizobium rhizogenes (strain K84 / ATCC BAA-868) (Agrobacterium radiobacter).